The sequence spans 91 residues: Dynein light chain 1, cytoplasmic (91 aa).

This sequence belongs to the dynein light chain family. In terms of assembly, homodimer. Cytoplasmic dynein consists of two catalytic heavy chains (HCs) and a number of non-catalytic subunits which present intermediate chains (ICs), light intermediate chains (LICs) and light chains (LCs). Component of the nuclear pore complex (NPC). NPC constitutes the exclusive means of nucleocytoplasmic transport. NPCs allow the passive diffusion of ions and small molecules and the active, nuclear transport receptor-mediated bidirectional transport of macromolecules such as proteins, RNAs, ribonucleoparticles (RNPs), and ribosomal subunits across the nuclear envelope. Due to its 8-fold rotational symmetry, all subunits are present with 8 copies or multiples thereof.

Its subcellular location is the cytoplasm. The protein resides in the cytoskeleton. The protein localises to the nucleus. It is found in the nuclear pore complex. Functionally, acts as one of several non-catalytic accessory components of the cytoplasmic dynein complex that are thought to be involved in linking dynein to cargos and to adapter proteins that regulate dynein function. Cytoplasmic dynein 1 acts as a motor for the intracellular retrograde motility of vesicles and organelles along microtubules. May play a role in changing or maintaining the spatial distribution of cytoskeletal structures. Also a component of the nuclear pore complex. This chain is Dynein light chain 1, cytoplasmic (DYN2), found in Debaryomyces hansenii (strain ATCC 36239 / CBS 767 / BCRC 21394 / JCM 1990 / NBRC 0083 / IGC 2968) (Yeast).